The chain runs to 198 residues: Recombination protein RecR (198 aa).

A C4-type zinc finger spans residues 58 to 73; sequence CSVCGNFTDKDPCAIC. The Toprim domain occupies 81 to 175; the sequence is NTICVVEHPK…KVTRIAHGIP (95 aa).

The protein belongs to the RecR family.

In terms of biological role, may play a role in DNA repair. It seems to be involved in an RecBC-independent recombinational process of DNA repair. It may act with RecF and RecO. The protein is Recombination protein RecR of Clostridium tetani (strain Massachusetts / E88).